Consider the following 239-residue polypeptide: Ribosomal RNA small subunit methyltransferase G (239 aa).

S-adenosyl-L-methionine-binding positions include Gly-79, Phe-84, 130-131, and Arg-149; that span reads AE.

Belongs to the methyltransferase superfamily. RNA methyltransferase RsmG family.

The protein resides in the cytoplasm. Its function is as follows. Specifically methylates the N7 position of a guanine in 16S rRNA. The chain is Ribosomal RNA small subunit methyltransferase G from Lactobacillus johnsonii (strain CNCM I-12250 / La1 / NCC 533).